A 122-amino-acid polypeptide reads, in one-letter code: Ribonuclease P protein component (122 aa).

The protein belongs to the RnpA family. As to quaternary structure, consists of a catalytic RNA component (M1 or rnpB) and a protein subunit.

The enzyme catalyses Endonucleolytic cleavage of RNA, removing 5'-extranucleotides from tRNA precursor.. RNaseP catalyzes the removal of the 5'-leader sequence from pre-tRNA to produce the mature 5'-terminus. It can also cleave other RNA substrates such as 4.5S RNA. The protein component plays an auxiliary but essential role in vivo by binding to the 5'-leader sequence and broadening the substrate specificity of the ribozyme. The polypeptide is Ribonuclease P protein component (Oenococcus oeni (strain ATCC BAA-331 / PSU-1)).